We begin with the raw amino-acid sequence, 464 residues long: Gamma-aminobutyric acid receptor subunit rho-3 (464 aa).

The first 15 residues, 1 to 15 (MVLAFWLAFFTYTWI), serve as a signal peptide directing secretion. The Extracellular segment spans residues 16–263 (TLMLDASAVK…LFINFVLRRH (248 aa)). Arginine 108 provides a ligand contact to 4-aminobutanoate. N-linked (GlcNAc...) asparagine glycosylation is present at asparagine 123. Serine 172 contributes to the 4-aminobutanoate binding site. Cysteine 181 and cysteine 195 are joined by a disulfide. A glycan (N-linked (GlcNAc...) asparagine) is linked at asparagine 194. Glutamate 200 serves as a coordination point for 4-aminobutanoate. Residues 264–284 (IFFFVLQTYFPAMLMVMLSWV) traverse the membrane as a helical segment. The Cytoplasmic segment spans residues 285–296 (SFWIDRRAVPAR). A helical membrane pass occupies residues 297 to 317 (VSLGITTVLTMSTIVTGVSAS). At 318-328 (MPQVSYVKAVD) the chain is on the extracellular side. A helical membrane pass occupies residues 329-349 (VYMWVSSLFVFLSVIEYAAVN). Positions 344–445 (EYAAVNYLTT…NNHVIDTYSR (102 aa)) are interaction with SQSTM1. Topologically, residues 350 to 443 (YLTTVEEWKQ…LENNHVIDTY (94 aa)) are cytoplasmic. Residues 444–464 (SRIVFPVVYIIFNLFYWGIYV) traverse the membrane as a helical segment.

This sequence belongs to the ligand-gated ion channel (TC 1.A.9) family. Gamma-aminobutyric acid receptor (TC 1.A.9.5) subfamily. GABRR3 sub-subfamily. As to quaternary structure, three rho subunits (rho-1/GBRR1, rho-2/GBRR2 and rho-3/GBRR3) coassemble either to form functional homopentamers or heteropentamers. Forms a ternary complex with SQSTM1 and PRKCZ. Expressed in retina.

It localises to the postsynaptic cell membrane. It is found in the cell membrane. The enzyme catalyses chloride(in) = chloride(out). Activated by agonists in the following the potency order: muscimol &gt; TACP &gt; TACA &gt; thiomuscimol &gt; CAMP &gt; CACA, when forming a homopentamer. Inhibited by TPMPA, a rho-specific antagonist, when forming a homopentamer. Inhibited antagonists in the following the potency order: TAMP = TPMPA &gt; P4MPA = THIP &gt; 14AA &gt; 3-APA, when forming a homopentamer. Rho subunit of the pentameric ligand-gated chloride channels responsible for mediating the effects of gamma-aminobutyric acid (GABA), the major inhibitory neurotransmitter in the brain. Rho-containing GABA-gated chloride channels are a subclass of GABA(A) receptors (GABAARs) entirely composed of rho subunits, where GABA molecules bind at the rho intersubunit interfaces. When activated by GABA, rho-GABAARs selectively allow the flow of chloride anions across the cell membrane down their electrochemical gradient. The sequence is that of Gamma-aminobutyric acid receptor subunit rho-3 from Rattus norvegicus (Rat).